A 477-amino-acid chain; its full sequence is Probable F-box protein At5g25300 (477 aa).

Residues 346-377 (VDMNKEDSQIEINEKETKINQEHDQSDETQAK) are a coiled coil. One can recognise an F-box domain in the interval 412–458 (SPPWSELPGDILRSVFERLSFVDFQRAKQTCPIKRSKSNCLRLWLIT).

In Arabidopsis thaliana (Mouse-ear cress), this protein is Probable F-box protein At5g25300.